A 66-amino-acid chain; its full sequence is Cold shock protein CspD (66 aa).

One can recognise a CSD domain in the interval glycine 4–valine 63.

It localises to the cytoplasm. The polypeptide is Cold shock protein CspD (cspD) (Bacillus subtilis (strain 168)).